The sequence spans 213 residues: Putative thiamine-phosphate synthase (213 aa).

Residues 38 to 42 (QLREK) and Asn-70 contribute to the 4-amino-2-methyl-5-(diphosphooxymethyl)pyrimidine site. Asp-71 contacts Mg(2+). Ser-109 provides a ligand contact to 4-amino-2-methyl-5-(diphosphooxymethyl)pyrimidine. 135 to 137 (TPS) contacts 2-[(2R,5Z)-2-carboxy-4-methylthiazol-5(2H)-ylidene]ethyl phosphate. Lys-138 is a 4-amino-2-methyl-5-(diphosphooxymethyl)pyrimidine binding site. 2-[(2R,5Z)-2-carboxy-4-methylthiazol-5(2H)-ylidene]ethyl phosphate contacts are provided by residues Gly-166 and 186-187 (IS).

The protein belongs to the thiamine-phosphate synthase family. Requires Mg(2+) as cofactor.

The enzyme catalyses 2-[(2R,5Z)-2-carboxy-4-methylthiazol-5(2H)-ylidene]ethyl phosphate + 4-amino-2-methyl-5-(diphosphooxymethyl)pyrimidine + 2 H(+) = thiamine phosphate + CO2 + diphosphate. It catalyses the reaction 2-(2-carboxy-4-methylthiazol-5-yl)ethyl phosphate + 4-amino-2-methyl-5-(diphosphooxymethyl)pyrimidine + 2 H(+) = thiamine phosphate + CO2 + diphosphate. The catalysed reaction is 4-methyl-5-(2-phosphooxyethyl)-thiazole + 4-amino-2-methyl-5-(diphosphooxymethyl)pyrimidine + H(+) = thiamine phosphate + diphosphate. It functions in the pathway cofactor biosynthesis; thiamine diphosphate biosynthesis; thiamine phosphate from 4-amino-2-methyl-5-diphosphomethylpyrimidine and 4-methyl-5-(2-phosphoethyl)-thiazole: step 1/1. Functionally, condenses 4-methyl-5-(beta-hydroxyethyl)thiazole monophosphate (THZ-P) and 2-methyl-4-amino-5-hydroxymethyl pyrimidine pyrophosphate (HMP-PP) to form thiamine monophosphate (TMP). The polypeptide is Putative thiamine-phosphate synthase (thiE) (Geobacter sulfurreducens (strain ATCC 51573 / DSM 12127 / PCA)).